Consider the following 190-residue polypeptide: HTH-type transcriptional repressor CutR (190 aa).

The HTH deoR-type domain occupies 3 to 58 (PINRQQHILKWLKEEGSLRISDISARFGVSEMTVYRDVNQLVQSNQVIKTAGGITL). A DNA-binding region (H-T-H motif) is located at residues 20 to 39 (LRISDISARFGVSEMTVYRD).

Its subcellular location is the cytoplasm. Functionally, may act as a negative transcriptional regulator of cutJ/ycnJ in the presence of copper. May use copper as a corepressor. This Bacillus subtilis (strain 168) protein is HTH-type transcriptional repressor CutR.